Reading from the N-terminus, the 312-residue chain is Malate dehydrogenase (312 aa).

NAD(+) is bound by residues Gly7–Gly13 and Asp34. 2 residues coordinate substrate: Arg81 and Arg87. Residues Asn94 and Ile117–Asn119 each bind NAD(+). Positions 119 and 153 each coordinate substrate. The active-site Proton acceptor is His177. Residue Met227 participates in NAD(+) binding.

Belongs to the LDH/MDH superfamily. MDH type 1 family. Homodimer.

It carries out the reaction (S)-malate + NAD(+) = oxaloacetate + NADH + H(+). Catalyzes the reversible oxidation of malate to oxaloacetate. The protein is Malate dehydrogenase of Serratia proteamaculans (strain 568).